Consider the following 1295-residue polypeptide: Phosphoribosylformylglycinamidine synthase (1295 aa).

Residues 305 to 327 (WPGAATGSGGEIRDEGATGRGAK) form a disordered region. Residues 307–318 (GAATGSGGEIRD) and alanine 678 each bind ATP. Residues glutamate 718, asparagine 722, and aspartate 884 each contribute to the Mg(2+) site. Residue serine 886 participates in ATP binding. In terms of domain architecture, Glutamine amidotransferase type-1 spans 1042-1295 (VAVLREQGVN…IFRNARKQLG (254 aa)). Residue cysteine 1135 is the Nucleophile of the active site. Active-site residues include histidine 1260 and glutamate 1262.

In the N-terminal section; belongs to the FGAMS family. Monomer. In terms of processing, both N-terminus methionine truncation and retention have been observed for this protein.

The protein localises to the cytoplasm. The catalysed reaction is N(2)-formyl-N(1)-(5-phospho-beta-D-ribosyl)glycinamide + L-glutamine + ATP + H2O = 2-formamido-N(1)-(5-O-phospho-beta-D-ribosyl)acetamidine + L-glutamate + ADP + phosphate + H(+). It functions in the pathway purine metabolism; IMP biosynthesis via de novo pathway; 5-amino-1-(5-phospho-D-ribosyl)imidazole from N(2)-formyl-N(1)-(5-phospho-D-ribosyl)glycinamide: step 1/2. Phosphoribosylformylglycinamidine synthase involved in the purines biosynthetic pathway. Catalyzes the ATP-dependent conversion of formylglycinamide ribonucleotide (FGAR) and glutamine to yield formylglycinamidine ribonucleotide (FGAM) and glutamate. This chain is Phosphoribosylformylglycinamidine synthase, found in Escherichia coli (strain K12).